Consider the following 270-residue polypeptide: MSEIILTPKEQPEVPLEAPNIKPDVFAGKSIDEIRNIQIMHGNEVVKLGDFFEVSGEPADSAADIKIIIDGDVYNTKRIGQDMTAGEILVKGNVNMYVGAGMKGGKITVEGNAKSWAGQDMRGGELEIFGDAGDYVGSSYRGDWRGMSGGVITVHGNAGNEIGEYMNGGKIIIKGDVNIMPGIHMNNGLIIIEGNAVARVGGEMAGGTIVVKGMIEEFLPGFKYLGVEKDIEVNGETFPGAYYKFEGDHAIKGAKGMVYAAVGCNGHIEP.

Tandem repeats lie at residues 80 to 92 (GQDM…LVKG), 99 to 111 (GAGM…TVEG), 118 to 130 (GQDM…EIFG), 144 to 156 (WRGM…TVHG), 163 to 175 (GEYM…IIKG), 182 to 194 (GIHM…IIEG), and 201 to 213 (GGEM…VVKG). The segment at 80–213 (GQDMTAGEIL…MAGGTIVVKG (134 aa)) is 7 X 13 AA repeats of [GW]-X-X-M-X-X-G-X-[IL]-X-[IV]-X-G.

The protein belongs to the FwdC/FmdC family. In terms of assembly, this enzyme is composed of seven subunits FwdA (65 kDa), FwdB (53 kDa), FwdC (31 kDa), FwdD (15 kDa), FwdE, FwdF and FwdG.

The enzyme catalyses N-formylmethanofuran + 2 oxidized [2Fe-2S]-[ferredoxin] + H2O = methanofuran + 2 reduced [2Fe-2S]-[ferredoxin] + CO2 + H(+). It participates in one-carbon metabolism; methanogenesis from CO(2); 5,10-methenyl-5,6,7,8-tetrahydromethanopterin from CO(2): step 1/3. With respect to regulation, not inactivated by cyanide. Catalyzes the reversible oxidation of CO(2) and methanofuran (MFR) to N-formylmethanofuran (CHO-MFR). Can only oxidize formylmethanofuran. This enzyme is oxygen-labile. This Methanothermobacter thermautotrophicus (strain ATCC 29096 / DSM 1053 / JCM 10044 / NBRC 100330 / Delta H) (Methanobacterium thermoautotrophicum) protein is Tungsten-containing formylmethanofuran dehydrogenase 2 subunit C (fwdC).